A 308-amino-acid chain; its full sequence is Oxygen-dependent coproporphyrinogen-III oxidase (308 aa).

Ser100 serves as a coordination point for substrate. A divalent metal cation is bound by residues His104 and His114. The active-site Proton donor is the His114. Residue 116–118 (NFR) participates in substrate binding. The a divalent metal cation site is built by His153 and His183. Positions 248–283 (YVEFNLVFDRGTIFGLQSGGRTESILSSMPPMATWK) are important for dimerization. Substrate is bound at residue 266–268 (GGR).

Belongs to the aerobic coproporphyrinogen-III oxidase family. As to quaternary structure, homodimer. A divalent metal cation serves as cofactor.

It is found in the cytoplasm. The catalysed reaction is coproporphyrinogen III + O2 + 2 H(+) = protoporphyrinogen IX + 2 CO2 + 2 H2O. The protein operates within porphyrin-containing compound metabolism; protoporphyrin-IX biosynthesis; protoporphyrinogen-IX from coproporphyrinogen-III (O2 route): step 1/1. Functionally, involved in the heme biosynthesis. Catalyzes the aerobic oxidative decarboxylation of propionate groups of rings A and B of coproporphyrinogen-III to yield the vinyl groups in protoporphyrinogen-IX. The polypeptide is Oxygen-dependent coproporphyrinogen-III oxidase (Francisella philomiragia subsp. philomiragia (strain ATCC 25017 / CCUG 19701 / FSC 153 / O#319-036)).